The sequence spans 339 residues: tRNA-splicing endonuclease (339 aa).

Active-site residues include Y274, H285, and K316.

It belongs to the tRNA-intron endonuclease family. Archaeal long subfamily. In terms of assembly, homodimer. The cofactor is Ca(2+). Requires Mg(2+) as cofactor. Post-translationally, the N-terminus is blocked.

It catalyses the reaction pretRNA = a 3'-half-tRNA molecule with a 5'-OH end + a 5'-half-tRNA molecule with a 2',3'-cyclic phosphate end + an intron with a 2',3'-cyclic phosphate and a 5'-hydroxyl terminus.. In terms of biological role, endonuclease that removes tRNA introns. Cleaves pre-tRNA at the 5'- and 3'-splice sites to release the intron. The products are an intron and two tRNA half-molecules bearing 2',3' cyclic phosphate and 5'-OH termini. Recognizes a pseudosymmetric substrate in which 2 bulged loops of 3 bases are separated by a stem of 4 bp. In Haloferax volcanii (strain ATCC 29605 / DSM 3757 / JCM 8879 / NBRC 14742 / NCIMB 2012 / VKM B-1768 / DS2) (Halobacterium volcanii), this protein is tRNA-splicing endonuclease.